A 222-amino-acid chain; its full sequence is Ribonuclease 3 (222 aa).

Residues 1–19 (MKFFIFILALQQLYVQSFA) form the signal peptide. Gln30 is a binding site for RNA. A disulfide bridge links Cys36 with Cys42. Residues His57, Phe107, 110–111 (HE), and 114–115 (KH) contribute to the RNA site. Residue His57 is the Proton donor of the active site. Intrachain disulfides connect Cys72-Cys118, Cys178-Cys213, and Cys194-Cys205. Residue Glu111 is part of the active site. His115 acts as the Proton acceptor in catalysis.

It belongs to the RNase T2 family.

It carries out the reaction a ribonucleotidyl-ribonucleotide-RNA + H2O = a 3'-end 3'-phospho-ribonucleotide-RNA + a 5'-end dephospho-ribonucleoside-RNA + H(+). Functionally, may remobilize phosphate, particularly when cells senesce or when phosphate becomes limiting. The sequence is that of Ribonuclease 3 (RNS3) from Arabidopsis thaliana (Mouse-ear cress).